The sequence spans 504 residues: Malonyl-CoA decarboxylase, mitochondrial (504 aa).

The N-terminal 50 residues, 1–50 (MRGLRRGLSRLGPRLGPWAVPRSLRRVLRAAGPWRGQSSAGSVSERGGAS), are a transit peptide targeting the mitochondrion. An alpha-helical domain region spans residues 51–201 (MEEVLSRSVP…VLKNMLSEWF (151 aa)). The tract at residues 202–504 (STGFLNLERV…VSQFQQNSKL (303 aa)) is catalytic domain. S340 functions as the Proton acceptor in the catalytic mechanism. H434 (proton donor) is an active-site residue. A Microbody targeting signal motif is present at residues 502-504 (SKL).

It is found in the mitochondrion. The protein localises to the cytoplasm. The protein resides in the peroxisome. The catalysed reaction is malonyl-CoA + H(+) = acetyl-CoA + CO2. It functions in the pathway metabolic intermediate biosynthesis; acetyl-CoA biosynthesis; acetyl-CoA from malonyl-CoA: step 1/1. Its function is as follows. Catalyzes the conversion of malonyl-CoA to acetyl-CoA. In the fatty acid biosynthesis MCD selectively removes malonyl-CoA and thus assures that methyl-malonyl-CoA is the only chain elongating substrate for fatty acid synthase and that fatty acids with multiple methyl side chains are produced. This Anser anser anser (Western greylag goose) protein is Malonyl-CoA decarboxylase, mitochondrial (MLYCD).